The primary structure comprises 157 residues: 2-C-methyl-D-erythritol 2,4-cyclodiphosphate synthase (157 aa).

A divalent metal cation contacts are provided by Asp8 and His10. Residues 8–10 (DIH) and 35–36 (HS) each bind 4-CDP-2-C-methyl-D-erythritol 2-phosphate. Residue His43 coordinates a divalent metal cation. Residues 57-59 (DIG), 62-66 (FPNND), and Lys142 each bind 4-CDP-2-C-methyl-D-erythritol 2-phosphate.

It belongs to the IspF family. As to quaternary structure, homotrimer. It depends on a divalent metal cation as a cofactor.

The enzyme catalyses 4-CDP-2-C-methyl-D-erythritol 2-phosphate = 2-C-methyl-D-erythritol 2,4-cyclic diphosphate + CMP. It participates in isoprenoid biosynthesis; isopentenyl diphosphate biosynthesis via DXP pathway; isopentenyl diphosphate from 1-deoxy-D-xylulose 5-phosphate: step 4/6. Its function is as follows. Involved in the biosynthesis of isopentenyl diphosphate (IPP) and dimethylallyl diphosphate (DMAPP), two major building blocks of isoprenoid compounds. Catalyzes the conversion of 4-diphosphocytidyl-2-C-methyl-D-erythritol 2-phosphate (CDP-ME2P) to 2-C-methyl-D-erythritol 2,4-cyclodiphosphate (ME-CPP) with a corresponding release of cytidine 5-monophosphate (CMP). This is 2-C-methyl-D-erythritol 2,4-cyclodiphosphate synthase from Wigglesworthia glossinidia brevipalpis.